A 256-amino-acid chain; its full sequence is Carboxysome shell protein CsoS1D (256 aa).

Positions 1–24 (MEPTSSLNRGDRKKGSSLVTGSEV) are disordered. 2 BMC circularly permuted domains span residues 55-157 (ELRT…RTKP) and 158-256 (STSW…ISNY). Residues 120–121 (ER) carry the Gates the pore motif.

Belongs to the EutL/PduB family. As to quaternary structure, homotrimer. Forms a dimer of stacked trimers, the same faces interact. A CsoS1-CsoS1D-CsoS2 complex can be isolated following expression in E.coli.

The protein localises to the carboxysome. Functionally, part of the carboxysome shell, a polyhedral inclusion where RuBisCO (ribulose bisphosphate carboxylase, cbbL-cbbS) is sequestered. It may control transport of RuBisCO reactants in and out of the carboxysome. There are estimated to be 6 CsoS1D hexamers per carboxysome. The sequence is that of Carboxysome shell protein CsoS1D from Prochlorococcus marinus subsp. pastoris (strain CCMP1986 / NIES-2087 / MED4).